The primary structure comprises 123 residues: Putative oocyte-secreted protein 1 homolog (123 aa).

The N-terminal stretch at 1-26 (MKTILGFKGLFYLHSLIWTCAGDWSA) is a signal peptide.

Belongs to the PLAC1 family.

The protein localises to the secreted. In terms of biological role, may be involved in cell differentiation. The protein is Putative oocyte-secreted protein 1 homolog (OOSP1) of Homo sapiens (Human).